We begin with the raw amino-acid sequence, 932 residues long: Protocadherin gamma-A8 (932 aa).

An N-terminal signal peptide occupies residues 1–29 (MAAPQSRPRRGELILLCALLGTLWEIGRG). Cadherin domains lie at 30-133 (QIRY…NPKF), 134-242 (QVED…APVF), 243-347 (PHPI…RPEV), 348-452 (IITS…PPTF), 453-562 (PHAS…APEI), and 570-682 (DGST…KPSV). Residues 30-692 (QIRYSVPEET…DPNDSSLTLY (663 aa)) are Extracellular-facing. Residue Asn47 is glycosylated (N-linked (GlcNAc...) asparagine). Asn414, Asn419, and Asn545 each carry an N-linked (GlcNAc...) asparagine glycan. N-linked (GlcNAc...) asparagine glycosylation is present at Asn685. Residues 693-713 (LVVAVAAISCVFLAFVAVLLG) traverse the membrane as a helical segment. The Cytoplasmic portion of the chain corresponds to 714–932 (LRLRRWHKSH…KKKSGKKEKK (219 aa)). Disordered stretches follow at residues 804-841 (ADHG…WPNN) and 902-932 (ATLT…KEKK). Polar residues predominate over residues 810-841 (APPNTDWRFSQAQRPGTSGSQNGDDTGTWPNN). Basic residues predominate over residues 922–932 (NKKKSGKKEKK).

The protein localises to the cell membrane. In terms of biological role, potential calcium-dependent cell-adhesion protein. May be involved in the establishment and maintenance of specific neuronal connections in the brain. The chain is Protocadherin gamma-A8 (PCDHGA8) from Pan troglodytes (Chimpanzee).